The chain runs to 352 residues: UDP-N-acetylglucosamine--N-acetylmuramyl-(pentapeptide) pyrophosphoryl-undecaprenol N-acetylglucosamine transferase (352 aa).

Serine 195 and glutamine 287 together coordinate UDP-N-acetyl-alpha-D-glucosamine.

It belongs to the glycosyltransferase 28 family. MurG subfamily.

The protein resides in the cell membrane. It catalyses the reaction Mur2Ac(oyl-L-Ala-gamma-D-Glu-L-Lys-D-Ala-D-Ala)-di-trans,octa-cis-undecaprenyl diphosphate + UDP-N-acetyl-alpha-D-glucosamine = beta-D-GlcNAc-(1-&gt;4)-Mur2Ac(oyl-L-Ala-gamma-D-Glu-L-Lys-D-Ala-D-Ala)-di-trans,octa-cis-undecaprenyl diphosphate + UDP + H(+). Its pathway is cell wall biogenesis; peptidoglycan biosynthesis. Cell wall formation. Catalyzes the transfer of a GlcNAc subunit on undecaprenyl-pyrophosphoryl-MurNAc-pentapeptide (lipid intermediate I) to form undecaprenyl-pyrophosphoryl-MurNAc-(pentapeptide)GlcNAc (lipid intermediate II). The protein is UDP-N-acetylglucosamine--N-acetylmuramyl-(pentapeptide) pyrophosphoryl-undecaprenol N-acetylglucosamine transferase of Streptococcus pneumoniae serotype 4 (strain ATCC BAA-334 / TIGR4).